Consider the following 182-residue polypeptide: Large ribosomal subunit protein bL25 (182 aa).

This sequence belongs to the bacterial ribosomal protein bL25 family. CTC subfamily. Part of the 50S ribosomal subunit; part of the 5S rRNA/L5/L18/L25 subcomplex. Contacts the 5S rRNA. Binds to the 5S rRNA independently of L5 and L18.

In terms of biological role, this is one of the proteins that binds to the 5S RNA in the ribosome where it forms part of the central protuberance. In Borrelia duttonii (strain Ly), this protein is Large ribosomal subunit protein bL25.